A 487-amino-acid polypeptide reads, in one-letter code: GTPase Der (487 aa).

EngA-type G domains follow at residues 3–167 (FTLA…EGFA) and 203–378 (LQIA…DIWN). GTP-binding positions include 9-16 (GRPNVGKS), 56-60 (DTAGL), 119-122 (NKAE), 209-216 (GRPNAGKS), 256-260 (DTAGM), and 321-324 (NKWD). The region spanning 379 to 463 (RRITTARLNS…PIRLTMRGQG (85 aa)) is the KH-like domain. Positions 459-487 (MRGQGDKNPFKERKFRTPSRLRKHLGKKG) are disordered. The span at 471 to 487 (RKFRTPSRLRKHLGKKG) shows a compositional bias: basic residues.

Belongs to the TRAFAC class TrmE-Era-EngA-EngB-Septin-like GTPase superfamily. EngA (Der) GTPase family. In terms of assembly, associates with the 50S ribosomal subunit.

In terms of biological role, GTPase that plays an essential role in the late steps of ribosome biogenesis. The chain is GTPase Der from Cereibacter sphaeroides (strain ATCC 17025 / ATH 2.4.3) (Rhodobacter sphaeroides).